Here is a 691-residue protein sequence, read N- to C-terminus: Amino-acid acetyltransferase, mitochondrial (691 aa).

Polar residues predominate over residues 1-27 (MSSTSLAWPRTAKSSLLQSADFSSTSK). 2 disordered regions span residues 1 to 29 (MSST…SKGY) and 65 to 95 (RLKA…PSGV). Basic and acidic residues predominate over residues 75–87 (QVKEPEKESKDDA). The region spanning 512–681 (NRPRMSLDDP…YEAVCRSIQP (170 aa)) is the N-acetyltransferase domain.

The protein belongs to the acetyltransferase family.

Its subcellular location is the mitochondrion. The catalysed reaction is L-glutamate + acetyl-CoA = N-acetyl-L-glutamate + CoA + H(+). It participates in amino-acid biosynthesis; L-arginine biosynthesis; N(2)-acetyl-L-ornithine from L-glutamate: step 1/4. N-acetylglutamate synthase involved in arginine biosynthesis. This chain is Amino-acid acetyltransferase, mitochondrial (arg2), found in Aspergillus terreus (strain NIH 2624 / FGSC A1156).